A 255-amino-acid polypeptide reads, in one-letter code: tRNA (guanine-N(7)-)-methyltransferase (255 aa).

The segment at 1 to 31 (MMHDDPNEAGLPPHNDAIPDETAEGADEVNP) is disordered. The span at 18-27 (IPDETAEGAD) shows a compositional bias: acidic residues. 4 residues coordinate S-adenosyl-L-methionine: glutamate 86, glutamate 111, aspartate 138, and aspartate 161. Aspartate 161 is an active-site residue. Substrate contacts are provided by residues lysine 165, aspartate 197, and 232–235 (TKFE).

It belongs to the class I-like SAM-binding methyltransferase superfamily. TrmB family.

It catalyses the reaction guanosine(46) in tRNA + S-adenosyl-L-methionine = N(7)-methylguanosine(46) in tRNA + S-adenosyl-L-homocysteine. The protein operates within tRNA modification; N(7)-methylguanine-tRNA biosynthesis. Functionally, catalyzes the formation of N(7)-methylguanine at position 46 (m7G46) in tRNA. This chain is tRNA (guanine-N(7)-)-methyltransferase, found in Burkholderia cenocepacia (strain HI2424).